The primary structure comprises 337 residues: Alanine racemase (337 aa).

The active-site Proton acceptor; specific for D-alanine is K33. K33 is modified (N6-(pyridoxal phosphate)lysine). R118 is a substrate binding site. Residue Y246 is the Proton acceptor; specific for L-alanine of the active site. Residue M292 participates in substrate binding.

The protein belongs to the alanine racemase family. The cofactor is pyridoxal 5'-phosphate.

The catalysed reaction is L-alanine = D-alanine. It participates in amino-acid biosynthesis; D-alanine biosynthesis; D-alanine from L-alanine: step 1/1. In terms of biological role, catalyzes the interconversion of L-alanine and D-alanine. May also act on other amino acids. In Campylobacter concisus (strain 13826), this protein is Alanine racemase (alr).